We begin with the raw amino-acid sequence, 128 residues long: Small ribosomal subunit protein bS6 (128 aa).

Belongs to the bacterial ribosomal protein bS6 family.

Binds together with bS18 to 16S ribosomal RNA. The protein is Small ribosomal subunit protein bS6 of Thermotoga sp. (strain RQ2).